The following is a 380-amino-acid chain: Putative 8-amino-7-oxononanoate synthase (380 aa).

Arginine 18 lines the substrate pocket. 106-107 (GY) serves as a coordination point for pyridoxal 5'-phosphate. Histidine 131 is a binding site for substrate. Residues serine 179, 205–208 (DEAH), and 236–239 (TFGK) each bind pyridoxal 5'-phosphate. An N6-(pyridoxal phosphate)lysine modification is found at lysine 239. Substrate is bound at residue threonine 352.

It belongs to the class-II pyridoxal-phosphate-dependent aminotransferase family. BioF subfamily. In terms of assembly, homodimer. Pyridoxal 5'-phosphate is required as a cofactor.

It catalyses the reaction 6-carboxyhexanoyl-[ACP] + L-alanine + H(+) = (8S)-8-amino-7-oxononanoate + holo-[ACP] + CO2. Its pathway is cofactor biosynthesis; biotin biosynthesis. Functionally, catalyzes the decarboxylative condensation of pimeloyl-[acyl-carrier protein] and L-alanine to produce 8-amino-7-oxononanoate (AON), [acyl-carrier protein], and carbon dioxide. The protein is Putative 8-amino-7-oxononanoate synthase (bioF) of Neisseria gonorrhoeae (strain ATCC 700825 / FA 1090).